The sequence spans 173 residues: Ribosome maturation factor RimM (173 aa).

Positions 95–169 (DPDEFYDHQL…VIEIDPPEGL (75 aa)) constitute a PRC barrel domain.

The protein belongs to the RimM family. As to quaternary structure, binds ribosomal protein uS19.

Its subcellular location is the cytoplasm. Its function is as follows. An accessory protein needed during the final step in the assembly of 30S ribosomal subunit, possibly for assembly of the head region. Essential for efficient processing of 16S rRNA. May be needed both before and after RbfA during the maturation of 16S rRNA. It has affinity for free ribosomal 30S subunits but not for 70S ribosomes. The protein is Ribosome maturation factor RimM of Mycobacteroides abscessus (strain ATCC 19977 / DSM 44196 / CCUG 20993 / CIP 104536 / JCM 13569 / NCTC 13031 / TMC 1543 / L948) (Mycobacterium abscessus).